A 549-amino-acid polypeptide reads, in one-letter code: Cation/acetate symporter ActP (549 aa).

13 consecutive transmembrane segments (helical) span residues 33–53, 77–97, 103–123, 148–168, 183–203, 206–226, 262–282, 303–323, 355–375, 404–424, 428–448, 464–484, and 493–513; these read WQAI…TYWA, LAIA…ALVF, GLIY…LIAE, ILSA…QMVG, IAVV…GMLA, WVQI…AFMV, ISAL…PHIL, GFMG…IMLV, LFLG…VAGL, VSKI…VLFE, IAFM…PIIL, GGWL…TIWV, and IFPY…GIWF.

It belongs to the sodium:solute symporter (SSF) (TC 2.A.21) family.

It is found in the cell inner membrane. Transports acetate. The chain is Cation/acetate symporter ActP from Escherichia coli O6:K15:H31 (strain 536 / UPEC).